The primary structure comprises 356 residues: Beta-hexosaminidase (356 aa).

Residues Asp-75, Arg-83, Arg-150, and 180-181 contribute to the substrate site; that span reads KH. His-193 serves as the catalytic Proton donor/acceptor. The Nucleophile role is filled by Asp-264.

The protein belongs to the glycosyl hydrolase 3 family. NagZ subfamily.

It is found in the cytoplasm. It catalyses the reaction Hydrolysis of terminal non-reducing N-acetyl-D-hexosamine residues in N-acetyl-beta-D-hexosaminides.. Its pathway is cell wall biogenesis; peptidoglycan recycling. In terms of biological role, plays a role in peptidoglycan recycling by cleaving the terminal beta-1,4-linked N-acetylglucosamine (GlcNAc) from peptide-linked peptidoglycan fragments, giving rise to free GlcNAc, anhydro-N-acetylmuramic acid and anhydro-N-acetylmuramic acid-linked peptides. The chain is Beta-hexosaminidase from Aromatoleum aromaticum (strain DSM 19018 / LMG 30748 / EbN1) (Azoarcus sp. (strain EbN1)).